A 37-amino-acid chain; its full sequence is Lambda-hexatoxin-Hf1a (37 aa).

4 disulfide bridges follow: Cys4/Cys18, Cys11/Cys23, Cys14/Cys15, and Cys17/Cys34.

The protein belongs to the neurotoxin 11 (kappa toxin) family. As to expression, expressed by the venom gland.

It is found in the secreted. Its function is as follows. This excitatory toxin inhibits insect calcium-activated potassium (KCa) channels (Slo-type). The sequence is that of Lambda-hexatoxin-Hf1a from Hadronyche formidabilis (Northern tree funnel-web spider).